The following is a 459-amino-acid chain: ATP synthase subunit beta (459 aa).

Residue 149 to 156 (GGAGVGKT) coordinates ATP.

The protein belongs to the ATPase alpha/beta chains family. In terms of assembly, F-type ATPases have 2 components, CF(1) - the catalytic core - and CF(0) - the membrane proton channel. CF(1) has five subunits: alpha(3), beta(3), gamma(1), delta(1), epsilon(1). CF(0) has three main subunits: a(1), b(2) and c(9-12). The alpha and beta chains form an alternating ring which encloses part of the gamma chain. CF(1) is attached to CF(0) by a central stalk formed by the gamma and epsilon chains, while a peripheral stalk is formed by the delta and b chains.

The protein localises to the cell inner membrane. It catalyses the reaction ATP + H2O + 4 H(+)(in) = ADP + phosphate + 5 H(+)(out). Produces ATP from ADP in the presence of a proton gradient across the membrane. The catalytic sites are hosted primarily by the beta subunits. This chain is ATP synthase subunit beta, found in Pseudomonas syringae pv. syringae (strain B728a).